Consider the following 426-residue polypeptide: Gamma-glutamyl phosphate reductase (426 aa).

The protein belongs to the gamma-glutamyl phosphate reductase family.

The protein resides in the cytoplasm. The enzyme catalyses L-glutamate 5-semialdehyde + phosphate + NADP(+) = L-glutamyl 5-phosphate + NADPH + H(+). Its pathway is amino-acid biosynthesis; L-proline biosynthesis; L-glutamate 5-semialdehyde from L-glutamate: step 2/2. Catalyzes the NADPH-dependent reduction of L-glutamate 5-phosphate into L-glutamate 5-semialdehyde and phosphate. The product spontaneously undergoes cyclization to form 1-pyrroline-5-carboxylate. The polypeptide is Gamma-glutamyl phosphate reductase (Nitrobacter winogradskyi (strain ATCC 25391 / DSM 10237 / CIP 104748 / NCIMB 11846 / Nb-255)).